The following is a 102-amino-acid chain: Small ribosomal subunit protein uS10 (102 aa).

The protein belongs to the universal ribosomal protein uS10 family. Part of the 30S ribosomal subunit.

In terms of biological role, involved in the binding of tRNA to the ribosomes. In Bacillus cereus (strain ATCC 10987 / NRS 248), this protein is Small ribosomal subunit protein uS10.